Consider the following 310-residue polypeptide: Aspartate carbamoyltransferase catalytic subunit (310 aa).

Carbamoyl phosphate is bound by residues arginine 55 and threonine 56. Residue lysine 85 participates in L-aspartate binding. 3 residues coordinate carbamoyl phosphate: arginine 106, histidine 135, and glutamine 138. 2 residues coordinate L-aspartate: arginine 168 and arginine 230. Positions 268 and 269 each coordinate carbamoyl phosphate.

Belongs to the aspartate/ornithine carbamoyltransferase superfamily. ATCase family. Heterododecamer (2C3:3R2) of six catalytic PyrB chains organized as two trimers (C3), and six regulatory PyrI chains organized as three dimers (R2).

It carries out the reaction carbamoyl phosphate + L-aspartate = N-carbamoyl-L-aspartate + phosphate + H(+). It functions in the pathway pyrimidine metabolism; UMP biosynthesis via de novo pathway; (S)-dihydroorotate from bicarbonate: step 2/3. Catalyzes the condensation of carbamoyl phosphate and aspartate to form carbamoyl aspartate and inorganic phosphate, the committed step in the de novo pyrimidine nucleotide biosynthesis pathway. The protein is Aspartate carbamoyltransferase catalytic subunit of Buchnera aphidicola subsp. Acyrthosiphon pisum (strain 5A).